The following is an 886-amino-acid chain: Alanine--tRNA ligase (886 aa).

Zn(2+) is bound by residues His-570, His-574, Cys-672, and His-676.

The protein belongs to the class-II aminoacyl-tRNA synthetase family. Zn(2+) serves as cofactor.

It localises to the cytoplasm. The enzyme catalyses tRNA(Ala) + L-alanine + ATP = L-alanyl-tRNA(Ala) + AMP + diphosphate. Its function is as follows. Catalyzes the attachment of alanine to tRNA(Ala) in a two-step reaction: alanine is first activated by ATP to form Ala-AMP and then transferred to the acceptor end of tRNA(Ala). Also edits incorrectly charged Ser-tRNA(Ala) and Gly-tRNA(Ala) via its editing domain. This chain is Alanine--tRNA ligase, found in Acidothermus cellulolyticus (strain ATCC 43068 / DSM 8971 / 11B).